The primary structure comprises 285 residues: Bifunctional protein FolD (285 aa).

NADP(+) contacts are provided by residues 165–167 (GRS) and serine 190.

Belongs to the tetrahydrofolate dehydrogenase/cyclohydrolase family. In terms of assembly, homodimer.

The enzyme catalyses (6R)-5,10-methylene-5,6,7,8-tetrahydrofolate + NADP(+) = (6R)-5,10-methenyltetrahydrofolate + NADPH. It catalyses the reaction (6R)-5,10-methenyltetrahydrofolate + H2O = (6R)-10-formyltetrahydrofolate + H(+). The protein operates within one-carbon metabolism; tetrahydrofolate interconversion. Functionally, catalyzes the oxidation of 5,10-methylenetetrahydrofolate to 5,10-methenyltetrahydrofolate and then the hydrolysis of 5,10-methenyltetrahydrofolate to 10-formyltetrahydrofolate. The polypeptide is Bifunctional protein FolD (Burkholderia pseudomallei (strain 1710b)).